The primary structure comprises 287 residues: Shikimate dehydrogenase (NADP(+)) (287 aa).

Residues 20-22 (SRS) and threonine 67 contribute to the shikimate site. Catalysis depends on lysine 71, which acts as the Proton acceptor. Glutamate 84 is a binding site for NADP(+). The shikimate site is built by asparagine 93 and aspartate 108. NADP(+)-binding positions include 132–136 (GAGGA) and methionine 226. Residue tyrosine 228 participates in shikimate binding. Glycine 250 provides a ligand contact to NADP(+).

It belongs to the shikimate dehydrogenase family. As to quaternary structure, homodimer.

The enzyme catalyses shikimate + NADP(+) = 3-dehydroshikimate + NADPH + H(+). Its pathway is metabolic intermediate biosynthesis; chorismate biosynthesis; chorismate from D-erythrose 4-phosphate and phosphoenolpyruvate: step 4/7. In terms of biological role, involved in the biosynthesis of the chorismate, which leads to the biosynthesis of aromatic amino acids. Catalyzes the reversible NADPH linked reduction of 3-dehydroshikimate (DHSA) to yield shikimate (SA). This Bordetella petrii (strain ATCC BAA-461 / DSM 12804 / CCUG 43448) protein is Shikimate dehydrogenase (NADP(+)).